A 447-amino-acid polypeptide reads, in one-letter code: Serine/threonine-protein phosphatase 2A 55 kDa regulatory subunit B gamma isoform (447 aa).

WD repeat units lie at residues 22 to 61, 87 to 128, 171 to 209, 220 to 260, 279 to 317, 334 to 375, and 410 to 446; these read TEADIISTVEFNHTGELLATGDKGGRVVIFQREPESKNAP, EIEE…KRPE, GHTYHINSISVNSDCETYMSADDLRINLWHLAITDRSFN, DLTE…LCDK, EIISSVSDVKFSHSGRYMLTRDYLTVKVWDLNMEARPIE, ENDC…DVTL, and DFTKKILHTAWHPAENIIAIAATNNLYIFQDKVNSDM.

The protein belongs to the phosphatase 2A regulatory subunit B family. In terms of assembly, PP2A consists of a common heterodimeric core enzyme, composed of a 36 kDa catalytic subunit (subunit C) and a 65 kDa constant regulatory subunit (PR65 or subunit A), that associates with a variety of regulatory subunits. Proteins that associate with the core dimer include three families of regulatory subunits B (the R2/B/PR55/B55, R3/B''/PR72/PR130/PR59 and R5/B'/B56 families), the 48 kDa variable regulatory subunit, viral proteins, and cell signaling molecules. Interacts with IER5.

Functionally, the B regulatory subunit might modulate substrate selectivity and catalytic activity, and might also direct the localization of the catalytic enzyme to a particular subcellular compartment. The sequence is that of Serine/threonine-protein phosphatase 2A 55 kDa regulatory subunit B gamma isoform (PPP2R2C) from Homo sapiens (Human).